The following is a 554-amino-acid chain: Hydroxylamine reductase (554 aa).

4 residues coordinate [2Fe-2S] cluster: Cys-3, Cys-6, Cys-18, and Cys-25. The hybrid [4Fe-2O-2S] cluster site is built by His-252, Glu-276, Cys-320, Cys-408, Cys-436, Cys-461, Glu-495, and Lys-497. Cys-408 carries the cysteine persulfide modification.

Belongs to the HCP family. It depends on [2Fe-2S] cluster as a cofactor. Hybrid [4Fe-2O-2S] cluster serves as cofactor.

The protein localises to the cytoplasm. It catalyses the reaction A + NH4(+) + H2O = hydroxylamine + AH2 + H(+). In terms of biological role, catalyzes the reduction of hydroxylamine to form NH(3) and H(2)O. The sequence is that of Hydroxylamine reductase from Shewanella baltica (strain OS155 / ATCC BAA-1091).